A 164-amino-acid chain; its full sequence is Large ribosomal subunit protein uL23 (164 aa).

The tract at residues M1 to V41 is disordered.

This sequence belongs to the universal ribosomal protein uL23 family.

This protein binds to a specific region on the 26S rRNA. This is Large ribosomal subunit protein uL23 (RPL23A) from Trypanosoma brucei brucei.